Reading from the N-terminus, the 376-residue chain is N-acetyldiaminopimelate deacetylase (376 aa).

The active site involves D69. Catalysis depends on E128, which acts as the Proton acceptor.

It belongs to the peptidase M20A family. N-acetyldiaminopimelate deacetylase subfamily.

It catalyses the reaction N-acetyl-(2S,6S)-2,6-diaminopimelate + H2O = (2S,6S)-2,6-diaminopimelate + acetate. Its pathway is amino-acid biosynthesis; L-lysine biosynthesis via DAP pathway; LL-2,6-diaminopimelate from (S)-tetrahydrodipicolinate (acetylase route): step 3/3. Catalyzes the conversion of N-acetyl-diaminopimelate to diaminopimelate and acetate. The sequence is that of N-acetyldiaminopimelate deacetylase from Streptococcus pneumoniae (strain Taiwan19F-14).